Here is a 329-residue protein sequence, read N- to C-terminus: Quinone-oxidoreductase QR1, chloroplastic (329 aa).

The protein belongs to the zinc-containing alcohol dehydrogenase family. Quinone oxidoreductase subfamily.

The protein resides in the plastid. Its subcellular location is the chloroplast outer membrane. It carries out the reaction 2 a quinone + NADPH + H(+) = 2 a 1,4-benzosemiquinone + NADP(+). Its activity is regulated as follows. Inhibited by dicumarol. NADPH-dependent single-electron reducing quinone reductase. Involved in haustorium initiation in parasitic plants through redox cycling of exogenous haustorium-inducing factors. Can use 9,10-phenanthrenequinone (PAQ), 1,2-naphthoquinone, 5-hydroxy-1,4-naphthoquinone (juglone) and 2,6-dimethoxy-p-benzoquinone (DMBQ) as substrates, but has no activity with menadione, diamide, 2,3-dimethoxy-5-methyl-1,4-benzoquinone or 1,4-naphthoquinone. The polypeptide is Quinone-oxidoreductase QR1, chloroplastic (Triphysaria versicolor (Yellow owl's clover)).